The sequence spans 450 residues: UDP-N-acetylmuramoylalanine--D-glutamate ligase (450 aa).

119–125 (GSNGKTT) lines the ATP pocket.

This sequence belongs to the MurCDEF family.

It is found in the cytoplasm. It carries out the reaction UDP-N-acetyl-alpha-D-muramoyl-L-alanine + D-glutamate + ATP = UDP-N-acetyl-alpha-D-muramoyl-L-alanyl-D-glutamate + ADP + phosphate + H(+). Its pathway is cell wall biogenesis; peptidoglycan biosynthesis. Functionally, cell wall formation. Catalyzes the addition of glutamate to the nucleotide precursor UDP-N-acetylmuramoyl-L-alanine (UMA). In Bacillus cereus (strain G9842), this protein is UDP-N-acetylmuramoylalanine--D-glutamate ligase.